We begin with the raw amino-acid sequence, 487 residues long: G-patch domain and KOW motifs-containing protein (487 aa).

Disordered stretches follow at residues 65–121, 181–232, and 295–367; these read HKNR…PLLM, VKPL…TGSA, and KVHQ…RPEP. A coiled-coil region spans residues 88 to 116; that stretch reads AVLSQAVKELIEESRRAQEDNSETNQTLS. Basic and acidic residues-rich tracts occupy residues 96–106 and 200–209; these read ELIEESRRAQE and SALKHLEPQK. Positions 154–200 constitute a G-patch domain; that stretch reads VQQYGMAMLRGMGWKEGEGIGRTFKQDVKPLEQKLRPKGLGLGADRS. Residues 226–253 form the KOW 1 domain; it reads GLGTGSAVQIQSGAYKDMYGKVEGIDPD. 2 stretches are compositionally biased toward basic and acidic residues: residues 295-333 and 352-367; these read KVHQ…DVKL and RSPE…RPEP. Residues 428–455 enclose the KOW 2 domain; it reads PKEEGEHVMVVLGKYRGMVGKILHRDKQ.

This sequence belongs to the MOS2 family. In terms of assembly, component of the minor spliceosome, which splices U12-type introns.

It is found in the nucleus. In terms of biological role, RNA-binding protein involved in pre-mRNA splicing. This chain is G-patch domain and KOW motifs-containing protein (gpkow), found in Xenopus laevis (African clawed frog).